The chain runs to 545 residues: MESYKPVWLKGAVILAINLIDKGYKPVAVGLGERDFYIDVKSDTSITLDEVKKAINENVLANVSIENNQIVYKGNKVSIIEDKVSISTNLNPKYFEILNISTHHPNPNEQYVRIRGVAFETEEQLKDYLTWLEKAEETDHRLIGEKLDLFSFHEEAGSGLVLFHPKGQTIRNELIAFMREINDSMGYQEVYTSHVFKTDIWKISGHYTLYRDKLIVFNMEGDEYGVKPMNCPAHILIYKSKPRTYRDLPIRFSEFGHVYRWEKKGELYGLLRVRGFVQDDGHIFLREDQLREEIKMLISKTVEVWHKFGFKDDDIKPYLSTRPDESIGSDELWEKATNALISALQESGLKFGIKEKEGAFYGPKIDFEIRDSLGRWWQLSTIQVDFNLPERFKLEYIDKDGIKKRPVMVHRAIYGSIDRFVAILLEHFKGKLPTWLSSVQVRVLPITDEVNEYAEKVLNDMRKRRIRAEIDYAGETLSKRIKNAYDQGVPYILIVGKKEASEGTVTVRARGNIEVRNVKFEKFLELLITEIAQRDVEQTTVKALK.

The interval 139 to 433 (DHRLIGEKLD…LLEHFKGKLP (295 aa)) is catalytic. Zn(2+) contacts are provided by Cys231, His282, and His410.

The protein belongs to the class-II aminoacyl-tRNA synthetase family. As to quaternary structure, homodimer. Probably interacts with its editing subunit. Zn(2+) serves as cofactor.

The protein resides in the cytoplasm. It catalyses the reaction tRNA(Thr) + L-threonine + ATP = L-threonyl-tRNA(Thr) + AMP + diphosphate + H(+). In terms of biological role, catalyzes the attachment of threonine to tRNA(Thr) in a two-step reaction: L-threonine is first activated by ATP to form Thr-AMP and then transferred to the acceptor end of tRNA(Thr). Also activates L-serine and transfers it to tRNA(Thr) but cannot deacylate incorrectly charged amino acid; unlike most archaea the editing function is found in a freestanding protein. The polypeptide is Threonine--tRNA ligase catalytic subunit (Saccharolobus islandicus (strain L.S.2.15 / Lassen #1) (Sulfolobus islandicus)).